Reading from the N-terminus, the 365-residue chain is Medium chain reductase pydE (365 aa).

The region spanning 21-362 (KLIDSLPVPP…SKRARGKVLI (342 aa)) is the Enoyl reductase (ER) domain. NADP(+) contacts are provided by residues 185–188 (SGSV), tyrosine 226, 274–275 (IG), and 354–355 (KR).

This sequence belongs to the zinc-containing alcohol dehydrogenase family. As to quaternary structure, monomer.

The protein operates within mycotoxin biosynthesis. Functionally, medium chain reductase; part of the gene cluster that mediates the biosynthesis of pyrrocidines, fungal natural products containing a macrocyclic para-cyclophane connected to a decahydrofluorene ring system that show potent antibiotic activities toward Gram-negative bacteria. Within the pathway, pydE functions synergistically with pydB, pydX and pydZ to form the cyclophane. The pathway begins with the PKS-NRPS pydA which, with the help of the trans-enoyl reductase pydC, synthesizes the polyketide-tyrosyl acyl thioester product which can be reductively off-loaded by the terminal reductase (R) domain in pydA. The alpha/beta hydrolase pydG is then required to catalyze the subsequent Knoevenagel condensation that affords the 3-pyrrolin-2-one ring, whereas the four proteins pydB, pydE, pydX and pydZ then function synergistically to form the cyclophane. PydB and the membrane-bound pydX and pydZ are lipid-binding proteins that can sequester and mold the pdyG product into the inverse S-shape. Binding of the medium chain reductase pydE to the complex would trigger the cascade oxidative cyclization. PydY is involved in the Diels-Alder cycloaddition that forms the decahydrofluorene core. Additional non-enzymatic hydroxylation yields pyrrocidine A2 which can be further reduced into pyrrocidine B by an endogenous reductase. This chain is Medium chain reductase pydE, found in Acremonium sp.